The sequence spans 162 residues: Protein-export protein SecB (162 aa).

Belongs to the SecB family. As to quaternary structure, homotetramer, a dimer of dimers. One homotetramer interacts with 1 SecA dimer.

The protein localises to the cytoplasm. One of the proteins required for the normal export of preproteins out of the cell cytoplasm. It is a molecular chaperone that binds to a subset of precursor proteins, maintaining them in a translocation-competent state. It also specifically binds to its receptor SecA. In Bradyrhizobium sp. (strain BTAi1 / ATCC BAA-1182), this protein is Protein-export protein SecB.